A 290-amino-acid chain; its full sequence is N-acetylneuraminate lyase (290 aa).

The aceneuramate site is built by Ser44 and Thr45. Tyr133 (proton donor) is an active-site residue. Catalysis depends on Lys161, which acts as the Schiff-base intermediate with substrate. Aceneuramate-binding residues include Thr163, Gly185, Asp187, Glu188, and Ser204.

This sequence belongs to the DapA family. NanA subfamily. As to quaternary structure, homotetramer.

The protein resides in the cytoplasm. The enzyme catalyses aceneuramate = aldehydo-N-acetyl-D-mannosamine + pyruvate. It participates in amino-sugar metabolism; N-acetylneuraminate degradation; D-fructose 6-phosphate from N-acetylneuraminate: step 1/5. Catalyzes the reversible aldol cleavage of N-acetylneuraminic acid (sialic acid; Neu5Ac) to form pyruvate and N-acetylmannosamine (ManNAc) via a Schiff base intermediate. The protein is N-acetylneuraminate lyase of Fusobacterium nucleatum subsp. nucleatum (strain ATCC 25586 / DSM 15643 / BCRC 10681 / CIP 101130 / JCM 8532 / KCTC 2640 / LMG 13131 / VPI 4355).